The primary structure comprises 507 residues: MRRLPRALLLQLRLALLVAAGAPEVLVSAPRSLVWGPGLQAAVVLPVRYFYLQAVNSEGQNLTRSPAGETPFKVVVKSLSPKELVRIHVPKPLDRNDGTFLMRYRMYETVDEGLKIEVLYGDEHVAQSPYILKGPVYHEYCECPEDPQAWQKTLSCPTKEPQIAKDFASFPSINLQQMLKEVPKRFGDERGAIVHYTILNNHVYRRSLGKYTDFKMFSDEILLSLTRKVLLPDLEFYVNLGDWPLEHRKVNGTPSPIPIISWCGSLDSRDVVLPTYDITHSMLEAMRGVTNDLLSIQGNTGPSWINKTERAFFRGRDSREERLQLVQLSKENPQLLDAGITGYFFFQEKEKELGKAKLMGFFDFFKYKYQVNVDGTVAAYRYPYLMLGDSLVLKQDSPYYEHFYMALEPWKHYVPIKRNLSDLLEKVKWAKENDEEAKKIAKEGQLMARDLLQPHRLYCYYYQVLQKYAERQSSKPEVRDGMELVPQPEDSTAICQCHRKKPSREEL.

The first 20 residues, 1-20 (MRRLPRALLLQLRLALLVAA), serve as a signal peptide directing secretion. The stretch at 24-134 (EVLVSAPRSL…VAQSPYILKG (111 aa)) is one Filamin repeat. Residues Asn-61 and Asn-306 are each glycosylated (N-linked (GlcNAc...) asparagine). A Prevents secretion from ER motif is present at residues 504 to 507 (REEL).

This sequence belongs to the KDELC family.

The protein resides in the endoplasmic reticulum lumen. The enzyme catalyses L-seryl-[EGF-like domain protein] + UDP-alpha-D-glucose = 3-O-(beta-D-glucosyl)-L-seryl-[EGF-like domain protein] + UDP + H(+). It carries out the reaction L-seryl-[EGF-like domain protein] + UDP-alpha-D-xylose = 3-O-(beta-D-xylosyl)-L-seryl-[EGF-like domain protein] + UDP + H(+). The protein operates within protein modification; protein glycosylation. Protein glucosyltransferase that catalyzes the transfer of glucose from UDP-glucose to a serine residue within the consensus sequence peptide C-X-N-T-X-G-S-F-X-C. Can also catalyze the transfer of xylose from UDP-xylose but less efficiently. Specifically targets extracellular EGF repeats of proteins such as NOTCH1, NOTCH3, FBN1, FBN2 and LTBP1. May regulate the transport of NOTCH1 and NOTCH3 to the plasma membrane and thereby the Notch signaling pathway. The sequence is that of Protein O-glucosyltransferase 3 from Homo sapiens (Human).